We begin with the raw amino-acid sequence, 871 residues long: DNA mismatch repair protein MutS (871 aa).

Residue 621–628 (GPNMAGKS) coordinates ATP.

The protein belongs to the DNA mismatch repair MutS family.

In terms of biological role, this protein is involved in the repair of mismatches in DNA. It is possible that it carries out the mismatch recognition step. This protein has a weak ATPase activity. The chain is DNA mismatch repair protein MutS from Geobacter sulfurreducens (strain ATCC 51573 / DSM 12127 / PCA).